Reading from the N-terminus, the 734-residue chain is Photosystem I P700 chlorophyll a apoprotein A2 (734 aa).

A run of 8 helical transmembrane segments spans residues 46–69, 135–158, 175–199, 273–291, 330–353, 369–395, 417–439, and 517–535; these read IFAS…FHVA, LYTG…LHLQ, LNHH…HVAI, IAHH…GHMY, LHFQ…QHMY, AALY…IFFI, AIIS…LYVH, and FLVH…LILV. Cysteine 559 and cysteine 568 together coordinate [4Fe-4S] cluster. Helical transmembrane passes span 575-596 and 643-665; these read AFYL…YWHW and LSVW…MFLI. Chlorophyll a is bound by residues histidine 654, methionine 662, and tyrosine 670. Tryptophan 671 lines the phylloquinone pocket. Residues 707-727 traverse the membrane as a helical segment; it reads LVGLAHFSVGYIFTYAAFLIA.

Belongs to the PsaA/PsaB family. As to quaternary structure, the PsaA/B heterodimer binds the P700 chlorophyll special pair and subsequent electron acceptors. PSI consists of a core antenna complex that captures photons, and an electron transfer chain that converts photonic excitation into a charge separation. The eukaryotic PSI reaction center is composed of at least 11 subunits. P700 is a chlorophyll a/chlorophyll a' dimer, A0 is one or more chlorophyll a, A1 is one or both phylloquinones and FX is a shared 4Fe-4S iron-sulfur center. is required as a cofactor.

It is found in the plastid. Its subcellular location is the chloroplast thylakoid membrane. It carries out the reaction reduced [plastocyanin] + hnu + oxidized [2Fe-2S]-[ferredoxin] = oxidized [plastocyanin] + reduced [2Fe-2S]-[ferredoxin]. Functionally, psaA and PsaB bind P700, the primary electron donor of photosystem I (PSI), as well as the electron acceptors A0, A1 and FX. PSI is a plastocyanin-ferredoxin oxidoreductase, converting photonic excitation into a charge separation, which transfers an electron from the donor P700 chlorophyll pair to the spectroscopically characterized acceptors A0, A1, FX, FA and FB in turn. Oxidized P700 is reduced on the lumenal side of the thylakoid membrane by plastocyanin. This chain is Photosystem I P700 chlorophyll a apoprotein A2, found in Piper cenocladum (Ant piper).